Reading from the N-terminus, the 401-residue chain is Hemorrhagic metalloproteinase-disintegrin-like kaouthiagin (401 aa).

A Peptidase M12B domain is found at 14 to 208; the sequence is KYIEFYVIVD…DRPQCILNKP (195 aa). Positions 17 and 101 each coordinate Ca(2+). An N-linked (GlcNAc...) asparagine glycan is attached at asparagine 112. Cystine bridges form between cysteine 125–cysteine 203, cysteine 164–cysteine 187, and cysteine 166–cysteine 171. Histidine 149 is a binding site for Zn(2+). The active site involves glutamate 150. The Zn(2+) site is built by histidine 153 and histidine 159. Ca(2+)-binding residues include cysteine 203, asparagine 206, isoleucine 218, asparagine 221, phenylalanine 223, glutamate 225, glutamate 228, and aspartate 231. Positions 216–285 constitute a Disintegrin domain; that stretch reads PAICGNYFVE…ECPTDSLQRN (70 aa). Disulfide bonds link cysteine 219–cysteine 248, cysteine 230–cysteine 243, cysteine 232–cysteine 238, cysteine 257–cysteine 277, cysteine 264–cysteine 296, cysteine 289–cysteine 301, cysteine 308–cysteine 358, cysteine 323–cysteine 366, cysteine 336–cysteine 346, cysteine 353–cysteine 389, and cysteine 383–cysteine 394. The short motif at 263 to 265 is the D/ECD-tripeptide element; it reads DCD. Residues aspartate 265, leucine 266, glutamate 268, and aspartate 280 each coordinate Ca(2+).

This sequence belongs to the venom metalloproteinase (M12B) family. P-III subfamily. P-IIIa sub-subfamily. As to quaternary structure, monomer. Requires Zn(2+) as cofactor. As to expression, expressed by the venom gland.

It localises to the secreted. Its function is as follows. Snake venom zinc protease that inhibits hemostasis by binding and cleaving the vWF in humans. Also has and inhibitory effect on the collagen-induced platelet aggregation. This is Hemorrhagic metalloproteinase-disintegrin-like kaouthiagin from Naja kaouthia (Monocled cobra).